The following is a 145-amino-acid chain: Large ribosomal subunit protein uL15 (145 aa).

2 stretches are compositionally biased toward basic residues: residues methionine 1–histidine 13 and lysine 19–glycine 29. Positions methionine 1–alanine 33 are disordered.

The protein belongs to the universal ribosomal protein uL15 family. Part of the 50S ribosomal subunit.

Binds to the 23S rRNA. This is Large ribosomal subunit protein uL15 from Thermoplasma volcanium (strain ATCC 51530 / DSM 4299 / JCM 9571 / NBRC 15438 / GSS1).